Reading from the N-terminus, the 1476-residue chain is MKSLLNAFTKKEVPFREAPAYSNRRRRPPNTLAAPRVLLRSNSDNNLNAGAPEWAVCSAATSHRSLSPQLLQQTPSKPDGATKSLGSYTPGPRSRSPSLNRLGGTAEDGKRTQPHWHVGSPFTPGANKDSLSTFEYPGPRRKLYSAVPGRLFVAVKPYQPQVDGEIPLHRGDRVKVLSIGEGGFWEGSARGHIGWFPAECVEEVQCKPRDSQAETRADRSKKLFRHYTVGSYDSFDAASDCIIEDKTVVLQKKDNEGFGFVLRGAKADTPIEEFTPTPAFPALQYLESVDEGGVAWQAGLRTGDFLIEVNNENVVKVGHRQVVNMIRQGGNHLILKVVTVTRNLDPDDTARKKAPPPPKRAPTTALTLRSKSMTAELEELGLSLVDKASVRKKKDKPEEIVPASKPSRTAENVAIESRVATIKQRPTSRCFPAASDVNSVYERQGIAVMTPTVPGSPKGPFLGLPRGTMRRQKSIDSRIFLSGITEEERQFLAPPMLKFTRSLSMPDTSEDIPPPPQSVPPSPPPPSPTTYNCPRSPTPRVYGTIKPAFNQNPVVAKVPPATRSDTVATMMREKGMFYRRELDRFSLDSEDVYSRSPAPQAAFRTKRGQMPENPYSEVGKIASKAVYVPAKPARRKGVLVKQSNVEDSPEKTCSIPIPTIIVKEPSTSSSGKSSQGSSMEIDPQATEPGQLRPDDSLTVSSPFAAAIAGAVRDREKRLEARRNSPAFLSTDLGDEDVGLGPPAPRMQASKFPEEGGFGDEDETEQPLLPTPGAAPRELENHFLGGGEAGAQGEAGGPLSSTSKAKGPESGPAAPLKSSSPAGPENYVHPLTGRLLDPSSPLALALSARDRAMQESQQGHKGEAPKADLNKPLYIDTKMRPSVESGFPPVTRQNTRGPLRRQETENKYETDLGKDRRADDKKNMLINIVDTAQQKSAGLLMVHTVDVPMAGPPLEEEEDREDGDTKPDHSPSTVPEGVPKTEGALQISAAPEPAVAPGRTIVAAGSVEEAVILPFRIPPPPLASVDLDEDFLFTEPLPPPLEFANSFDIPDDRAASVPALADLVKQKKNDTSQPPTLNSSQPANSTDSKKPAGISNCLPSSFLPPPESFDAVTDSGIEEVDSRSSSDHHLETTSTISTVSSISTLSSEGGESMDTCTVYADGQAFVVDKPPVPPKPKMKPIVHKSNALYQDTLPEEDTDGFVIPPPAPPPPPGSAQAGVAKVIQPRTSKLWGDVPEVKSPILSGPKANVISELNSILQQMNRGKSVKPGEGLELPVGAKSANLAPRSPEVMSTVSGTRSTTVTFTVRPGTSQPITLQSRPPDYESRTSGPRRAPSPVVSPTELSKEILPTPPPPSATAASPSPTLSDVFSLPSQSPAGDLFGLNPAGRSRSPSPSILQQPISNKPFTTKPVHLWTKPDVADWLESLNLGEHKETFMDNEIDGSHLPNLQKEDLIDLGVTRVGHRMNIERALKQLLDR.

The segment covering L66–S76 has biased composition (polar residues). The segment at L66–F134 is disordered. An SH3 domain is found at V147–C206. Residue V162 is modified to Phosphoserine. The PDZ domain occupies T247 to T341. Position 372 is a phosphoserine (S372). Residues R391–N412 are disordered. S456 carries the post-translational modification Phosphoserine. T485 is subject to Phosphothreonine. The interval L503 to C533 is disordered. Over residues I512 to P528 the composition is skewed to pro residues. S586 bears the Phosphoserine mark. Disordered regions lie at residues T659–R916, V946–A983, and P1057–D1153. The span at S666–S678 shows a compositional bias: low complexity. Basic and acidic residues predominate over residues V711–R722. S724 is modified (phosphoserine). Residues L783–G795 show a composition bias toward gly residues. A compositionally biased stretch (low complexity) spans R833 to S846. Basic and acidic residues-rich tracts occupy residues A847–L868 and R899–R916. T903 carries the phosphothreonine modification. The span at T1070–T1085 shows a compositional bias: polar residues. Basic and acidic residues predominate over residues V1119–E1130. Low complexity predominate over residues T1131–S1151. The SH3-binding motif lies at P1169–P1175. Disordered regions lie at residues E1195–A1216 and N1260–K1403. Residues I1202–G1212 show a composition bias toward pro residues. Residues S1291–V1305 show a composition bias toward low complexity. T1292 carries an O-linked (GlcNAc) threonine glycan. The segment covering P1307–S1317 has biased composition (polar residues). A phosphoserine mark is found at S1334 and S1338. Residues L1364–P1375 show a composition bias toward polar residues. Low complexity predominate over residues R1387 to S1401. In terms of domain architecture, SAM spans W1413 to R1476.

Belongs to the SHANK family. In terms of assembly, is part of a complex with DLG4/PSD-95 and DLGAP1/GKAP. Interacts with CTTN/cortactin SH3 domain, DLGAP1/GKAP and alpha-latrotoxin receptor 1. Interacts with DNM2, DBNL, GRID2, BAIAP2, SLC9A3, PLCB3 and CFTR. Interacts (via proline-rich region) with PDE4D. Interacts with ABI1 (via SH3 domain). In terms of tissue distribution, detected in brain (at protein level), where it is highly expressed in Purkinje cells.

Its subcellular location is the apical cell membrane. The protein resides in the cytoplasm. It is found in the synapse. It localises to the postsynaptic density. The protein localises to the cell projection. Its subcellular location is the dendritic spine. The protein resides in the growth cone. Functionally, seems to be an adapter protein in the postsynaptic density (PSD) of excitatory synapses that interconnects receptors of the postsynaptic membrane including NMDA-type and metabotropic glutamate receptors, and the actin-based cytoskeleton. May play a role in the structural and functional organization of the dendritic spine and synaptic junction. The sequence is that of SH3 and multiple ankyrin repeat domains protein 2 (Shank2) from Mus musculus (Mouse).